The following is a 1131-amino-acid chain: Tyrosine-protein kinase JAK2 (1131 aa).

The interval 1–239 (MGMACLTMTE…RYRFRRFIEQ (239 aa)) is interaction with cytokine/interferon/growth hormone receptors. The FERM domain maps to 37–380 (PVLQVYLYHS…GYYRLTADAH (344 aa)). At Tyr-119 the chain carries Phosphotyrosine; by autocatalysis. Phosphotyrosine occurs at positions 372 and 373. In terms of domain architecture, SH2; atypical spans 401 to 482 (HGPISMDFAI…NLKDLLNCYQ (82 aa)). Ser-523 is subject to Phosphoserine. Positions 545 to 809 (LIFNESLGQG…AIIRDLNSLF (265 aa)) constitute a Protein kinase 1 domain. 2 positions are modified to phosphotyrosine: Tyr-570 and Tyr-813. The 278-residue stretch at 849 to 1126 (LKFLQQLGKG…RDLALRVDQI (278 aa)) folds into the Protein kinase 2 domain. Residue 855–863 (LGKGNFGSV) participates in ATP binding. Tyr-868 carries the phosphotyrosine; by autocatalysis modification. Lys-882 contributes to the ATP binding site. Residues Tyr-966 and Tyr-972 each carry the phosphotyrosine; by autocatalysis modification. The active-site Proton acceptor is the Asp-976. Tyr-1007 and Tyr-1008 each carry phosphotyrosine; by autocatalysis.

This sequence belongs to the protein kinase superfamily. Tyr protein kinase family. JAK subfamily. Interacts with IL23R, SKB1 and STAM2. Interacts with EPOR. Interacts with LYN. Interacts with SIRPA. Interacts with SH2B1. Interacts with TEC. Interacts with IFNGR2 (via intracellular domain). Interacts with LEPR (Isoform B). Interacts with HSP90AB1; promotes functional activation in a heat shock-dependent manner. Interacts with STRA6. Interacts with ASB2; the interaction targets JAK2 for Notch-induced proteasomal degradation. It depends on Mg(2+) as a cofactor. In terms of processing, autophosphorylated, leading to regulate its activity. Leptin promotes phosphorylation on tyrosine residues, including phosphorylation on Tyr-813. Autophosphorylation on Tyr-119 in response to EPO down-regulates its kinase activity. Autophosphorylation on Tyr-868, Tyr-966 and Tyr-972 in response to growth hormone (GH) are required for maximal kinase activity. Also phosphorylated by TEC. Phosphorylated on tyrosine residues in response to interferon gamma signaling. Phosphorylated on tyrosine residues in response to a signaling cascade that is activated by increased cellular retinol. Post-translationally, undergoes Notch-induced ubiquitination and subsequent proteasomal degradation which is mediated by ASB1 or ASB2, the substrate-recognition components of probable ECS E3 ubiquitin-protein ligase complexes.

Its subcellular location is the endomembrane system. The protein localises to the cytoplasm. It is found in the nucleus. It catalyses the reaction L-tyrosyl-[protein] + ATP = O-phospho-L-tyrosyl-[protein] + ADP + H(+). Regulated by autophosphorylation, can both activate or decrease activity. Heme regulates its activity by enhancing the phosphorylation on Tyr-1007 and Tyr-1008. In terms of biological role, non-receptor tyrosine kinase involved in various processes such as cell growth, development, differentiation or histone modifications. Mediates essential signaling events in both innate and adaptive immunity. In the cytoplasm, plays a pivotal role in signal transduction via its association with type I receptors such as growth hormone (GHR), prolactin (PRLR), leptin (LEPR), erythropoietin (EPOR), thrombopoietin (THPO); or type II receptors including IFN-alpha, IFN-beta, IFN-gamma and multiple interleukins. Following ligand-binding to cell surface receptors, phosphorylates specific tyrosine residues on the cytoplasmic tails of the receptor, creating docking sites for STATs proteins. Subsequently, phosphorylates the STATs proteins once they are recruited to the receptor. Phosphorylated STATs then form homodimer or heterodimers and translocate to the nucleus to activate gene transcription. For example, cell stimulation with erythropoietin (EPO) during erythropoiesis leads to JAK2 autophosphorylation, activation, and its association with erythropoietin receptor (EPOR) that becomes phosphorylated in its cytoplasmic domain. Then, STAT5 (STAT5A or STAT5B) is recruited, phosphorylated and activated by JAK2. Once activated, dimerized STAT5 translocates into the nucleus and promotes the transcription of several essential genes involved in the modulation of erythropoiesis. Part of a signaling cascade that is activated by increased cellular retinol and that leads to the activation of STAT5 (STAT5A or STAT5B). In addition, JAK2 mediates angiotensin-2-induced ARHGEF1 phosphorylation. Plays a role in cell cycle by phosphorylating CDKN1B. Cooperates with TEC through reciprocal phosphorylation to mediate cytokine-driven activation of FOS transcription. In the nucleus, plays a key role in chromatin by specifically mediating phosphorylation of 'Tyr-41' of histone H3 (H3Y41ph), a specific tag that promotes exclusion of CBX5 (HP1 alpha) from chromatin. Up-regulates the potassium voltage-gated channel activity of KCNA3. The sequence is that of Tyrosine-protein kinase JAK2 from Sus scrofa (Pig).